We begin with the raw amino-acid sequence, 221 residues long: GFP-like non-fluorescent chromoprotein (221 aa).

The segment at residues 62–64 (QYG) is a cross-link (2-iminomethyl-5-imidazolinone (Gln-Gly)). (E)-2,3-didehydrotyrosine is present on Tyr63.

This sequence belongs to the GFP family. Homotetramer. Post-translationally, contains a chromophore consisting of modified amino acid residues. The chromophore is formed by autocatalytic backbone condensation between Xaa-N and Gly-(N+2), oxidation of Tyr-(N+1) to didehydrotyrosine, and formation of a double bond to the alpha-amino nitrogen of residue Xaa-N. Maturation of the chromophore requires nothing other than molecular oxygen.

Thought to play a role in photoprotection of the coral's resident symbiont microalgae's photosystems from photoinhibition caused by high light levels found near the surface of coral reefs. This Montipora efflorescens (Pore coral) protein is GFP-like non-fluorescent chromoprotein.